A 160-amino-acid polypeptide reads, in one-letter code: Small ribosomal subunit protein uS7 (160 aa).

The protein belongs to the universal ribosomal protein uS7 family. In terms of assembly, part of the 30S ribosomal subunit. Contacts proteins S9 and S11.

In terms of biological role, one of the primary rRNA binding proteins, it binds directly to 16S rRNA where it nucleates assembly of the head domain of the 30S subunit. Is located at the subunit interface close to the decoding center, probably blocks exit of the E-site tRNA. This is Small ribosomal subunit protein uS7 from Anaplasma phagocytophilum (strain HZ).